The primary structure comprises 412 residues: uncharacterized protein (412 aa).

The Radical SAM core domain maps to 50–264 (EVDIRTAYIN…KSGRRIVIGD (215 aa)). [4Fe-4S] cluster-binding residues include cysteine 64, cysteine 68, and cysteine 71.

Belongs to the radical SAM superfamily. Anaerobic sulfatase-maturating enzyme family. [4Fe-4S] cluster is required as a cofactor.

This is an uncharacterized protein from Archaeoglobus fulgidus (strain ATCC 49558 / DSM 4304 / JCM 9628 / NBRC 100126 / VC-16).